Consider the following 491-residue polypeptide: Zinc finger protein 655 (491 aa).

Residues 1 to 52 are disordered; the sequence is MEEIPAQEAAGSPRVQFQSLETQSECLSPEPQFVQDTDMEQGLTGDGETREE. The span at 15 to 26 shows a compositional bias: polar residues; it reads VQFQSLETQSEC. Phosphoserine is present on Gln-60. Residues Lys-77, Lys-190, and Lys-201 each participate in a glycyl lysine isopeptide (Lys-Gly) (interchain with G-Cter in SUMO2) cross-link. C2H2-type zinc fingers lie at residues 212–234, 240–262, 303–325, 330–353, 380–402, and 408–430; these read YKCDVCGKIFHQSSALTRHQRIH, YKCKECEKSFSQSSSLSRHKRIH, YKCSSCERVFSRSVHLTQHQKIH, CKCTVCGSDFCHTSYLLEHQRVHH, YTCSECGKDFRLNSHLIQHQRIH, and HECNECGKAFSQTSCLIQHHKMH.

This sequence belongs to the krueppel C2H2-type zinc-finger protein family. Interacts with VAV1 and CDK4. Interacts with INTS13; promoting association with the integrator complex.

The protein localises to the nucleus. Its function is as follows. Probable transcription factor. This is Zinc finger protein 655 from Homo sapiens (Human).